The following is a 286-amino-acid chain: Shikimate dehydrogenase (NADP(+)) (286 aa).

Residues 22 to 24 (SRS) and threonine 71 contribute to the shikimate site. The active-site Proton acceptor is the lysine 75. Residue glutamate 87 coordinates NADP(+). Positions 96 and 111 each coordinate shikimate. Residues 136–140 (GAGGA), 160–165 (NRTAAR), and isoleucine 225 contribute to the NADP(+) site. Tyrosine 227 contributes to the shikimate binding site. Glycine 248 is a binding site for NADP(+).

The protein belongs to the shikimate dehydrogenase family. Homodimer.

The enzyme catalyses shikimate + NADP(+) = 3-dehydroshikimate + NADPH + H(+). It participates in metabolic intermediate biosynthesis; chorismate biosynthesis; chorismate from D-erythrose 4-phosphate and phosphoenolpyruvate: step 4/7. Its function is as follows. Involved in the biosynthesis of the chorismate, which leads to the biosynthesis of aromatic amino acids. Catalyzes the reversible NADPH linked reduction of 3-dehydroshikimate (DHSA) to yield shikimate (SA). In Sinorhizobium fredii (strain NBRC 101917 / NGR234), this protein is Shikimate dehydrogenase (NADP(+)).